The sequence spans 101 residues: A-type ATP synthase subunit K (101 aa).

3 helical membrane passes run 4–24, 32–52, and 75–95; these read ALLI…AAQA, FMGI…GAGV, and VLIF…FAVL.

This sequence belongs to the V-ATPase proteolipid subunit family. Has multiple subunits with at least A(3), B(3), C, D, E, F, H, I and proteolipid K(x).

It is found in the cell membrane. In terms of biological role, component of the A-type ATP synthase that produces ATP from ADP in the presence of a proton gradient across the membrane. The chain is A-type ATP synthase subunit K from Sulfolobus acidocaldarius (strain ATCC 33909 / DSM 639 / JCM 8929 / NBRC 15157 / NCIMB 11770).